Here is a 314-residue protein sequence, read N- to C-terminus: Deoxymugineic acid synthase 1 (314 aa).

Positions 1-21 are disordered; the sequence is MGAGDRTVAGMPRIGMGTAVQ. An NADP(+)-binding site is contributed by Asp44. Tyr49 functions as the Proton donor in the catalytic mechanism. A substrate-binding site is contributed by His112. NADP(+) contacts are provided by residues 158–159, Gln180, 258–266, and 273–281; these read AN, FDEARMREN, and ELTEEERRR.

This sequence belongs to the aldo/keto reductase family.

It carries out the reaction 2'-deoxymugineate + NAD(+) = 3''-deamino-3''-oxonicotianamine + NADH + H(+). The enzyme catalyses 2'-deoxymugineate + NADP(+) = 3''-deamino-3''-oxonicotianamine + NADPH + H(+). It participates in siderophore biosynthesis. Catalyzes the reduction of a 3''-keto intermediate during the biosynthesis of 2'-deoxymugineic acid (DMA) from L-Met. Involved in the formation of phytosiderophores (MAs) belonging to the mugineic acid family and required to acquire iron. In Hordeum vulgare (Barley), this protein is Deoxymugineic acid synthase 1.